Reading from the N-terminus, the 358-residue chain is Dihydroorotate dehydrogenase (quinone) (358 aa).

FMN contacts are provided by residues Ala61–Lys65 and Gly85. Lys65 contacts substrate. Asn110–Leu114 contributes to the substrate binding site. Residues Asn139 and Asn170 each coordinate FMN. Residue Asn170 participates in substrate binding. The active-site Nucleophile is the Ser173. Residue Asn175 participates in substrate binding. Positions 211 and 239 each coordinate FMN. Residue Asn240–Thr241 participates in substrate binding. FMN contacts are provided by residues Gly263, Gly292, and Tyr313–Ser314.

The protein belongs to the dihydroorotate dehydrogenase family. Type 2 subfamily. In terms of assembly, monomer. Requires FMN as cofactor.

The protein resides in the cell membrane. It carries out the reaction (S)-dihydroorotate + a quinone = orotate + a quinol. The protein operates within pyrimidine metabolism; UMP biosynthesis via de novo pathway; orotate from (S)-dihydroorotate (quinone route): step 1/1. Its function is as follows. Catalyzes the conversion of dihydroorotate to orotate with quinone as electron acceptor. The chain is Dihydroorotate dehydrogenase (quinone) from Methylorubrum extorquens (strain CM4 / NCIMB 13688) (Methylobacterium extorquens).